The following is an 833-amino-acid chain: Leucine--tRNA ligase (833 aa).

The 'HIGH' region signature appears at 41–52; that stretch reads PYPSGVGLHVGH. The 'KMSKS' region signature appears at 610–614; it reads KMSKS. Residue Lys-613 participates in ATP binding.

The protein belongs to the class-I aminoacyl-tRNA synthetase family.

The protein localises to the cytoplasm. The enzyme catalyses tRNA(Leu) + L-leucine + ATP = L-leucyl-tRNA(Leu) + AMP + diphosphate. The sequence is that of Leucine--tRNA ligase from Streptococcus pneumoniae serotype 2 (strain D39 / NCTC 7466).